The chain runs to 215 residues: Transcription elongation factor A protein-like 4 (215 aa).

M1 is subject to N-acetylmethionine. The tract at residues 1-133 is disordered; sequence MEKLYSENEG…RKAKRKTNKG (133 aa). Phosphoserine occurs at positions 6, 88, and 102. Residues 25–102 are compositionally biased toward basic and acidic residues; it reads QDERKPEVTC…KPEIEGKPES (78 aa).

This sequence belongs to the TFS-II family. TFA subfamily.

It is found in the nucleus. Its function is as follows. May be involved in transcriptional regulation. This Homo sapiens (Human) protein is Transcription elongation factor A protein-like 4 (TCEAL4).